Reading from the N-terminus, the 235-residue chain is Large ribosomal subunit protein uL1 (235 aa).

Belongs to the universal ribosomal protein uL1 family. Part of the 50S ribosomal subunit.

Its function is as follows. Binds directly to 23S rRNA. The L1 stalk is quite mobile in the ribosome, and is involved in E site tRNA release. Functionally, protein L1 is also a translational repressor protein, it controls the translation of the L11 operon by binding to its mRNA. In Mycobacterium marinum (strain ATCC BAA-535 / M), this protein is Large ribosomal subunit protein uL1.